Reading from the N-terminus, the 285-residue chain is Shikimate dehydrogenase (NADP(+)) (285 aa).

Shikimate contacts are provided by residues 19-21 and T66; that span reads SLS. Catalysis depends on K70, which acts as the Proton acceptor. N91 and D107 together coordinate shikimate. NADP(+) is bound by residues 129–133 and L228; that span reads GSGGA. Y230 is a shikimate binding site. Position 251 (G251) interacts with NADP(+).

This sequence belongs to the shikimate dehydrogenase family. In terms of assembly, homodimer.

The catalysed reaction is shikimate + NADP(+) = 3-dehydroshikimate + NADPH + H(+). The protein operates within metabolic intermediate biosynthesis; chorismate biosynthesis; chorismate from D-erythrose 4-phosphate and phosphoenolpyruvate: step 4/7. Involved in the biosynthesis of the chorismate, which leads to the biosynthesis of aromatic amino acids. Catalyzes the reversible NADPH linked reduction of 3-dehydroshikimate (DHSA) to yield shikimate (SA). This is Shikimate dehydrogenase (NADP(+)) from Prochlorococcus marinus subsp. pastoris (strain CCMP1986 / NIES-2087 / MED4).